A 182-amino-acid polypeptide reads, in one-letter code: ATP synthase subunit delta (182 aa).

The protein belongs to the ATPase delta chain family. F-type ATPases have 2 components, F(1) - the catalytic core - and F(0) - the membrane proton channel. F(1) has five subunits: alpha(3), beta(3), gamma(1), delta(1), epsilon(1). CF(0) has four main subunits: a(1), b(1), b'(1) and c(10-14). The alpha and beta chains form an alternating ring which encloses part of the gamma chain. F(1) is attached to F(0) by a central stalk formed by the gamma and epsilon chains, while a peripheral stalk is formed by the delta, b and b' chains.

The protein localises to the cellular thylakoid membrane. In terms of biological role, f(1)F(0) ATP synthase produces ATP from ADP in the presence of a proton or sodium gradient. F-type ATPases consist of two structural domains, F(1) containing the extramembraneous catalytic core and F(0) containing the membrane proton channel, linked together by a central stalk and a peripheral stalk. During catalysis, ATP synthesis in the catalytic domain of F(1) is coupled via a rotary mechanism of the central stalk subunits to proton translocation. This protein is part of the stalk that links CF(0) to CF(1). It either transmits conformational changes from CF(0) to CF(1) or is implicated in proton conduction. The chain is ATP synthase subunit delta from Synechococcus sp. (strain CC9605).